Consider the following 206-residue polypeptide: Small ribosomal subunit protein uS4 (206 aa).

The S4 RNA-binding domain occupies 96-160; sequence CRLDNVVYRM…AQLRIVQALE (65 aa).

Belongs to the universal ribosomal protein uS4 family. As to quaternary structure, part of the 30S ribosomal subunit. Contacts protein S5. The interaction surface between S4 and S5 is involved in control of translational fidelity.

In terms of biological role, one of the primary rRNA binding proteins, it binds directly to 16S rRNA where it nucleates assembly of the body of the 30S subunit. Functionally, with S5 and S12 plays an important role in translational accuracy. The sequence is that of Small ribosomal subunit protein uS4 from Pseudomonas putida (strain GB-1).